Consider the following 458-residue polypeptide: RuvB-like helicase 1 (458 aa).

Residues 1–29 (MVQISEVKGNSRDNRTAAHTHIKGLGLRP) form a disordered region. 71–78 (GGPGTGKT) serves as a coordination point for ATP.

This sequence belongs to the RuvB family. As to quaternary structure, may form heterododecamers with RVB2. Component of the SWR1 chromatin remodeling complex, the INO80 chromatin remodeling complex, and of the R2TP complex.

It localises to the nucleus. It catalyses the reaction ATP + H2O = ADP + phosphate + H(+). Functionally, DNA helicase which participates in several chromatin remodeling complexes, including the SWR1 and the INO80 complexes. The SWR1 complex mediates the ATP-dependent exchange of histone H2A for the H2A variant HZT1 leading to transcriptional regulation of selected genes by chromatin remodeling. The INO80 complex remodels chromatin by shifting nucleosomes and is involved in DNA repair. Also involved in pre-rRNA processing. This Emericella nidulans (strain FGSC A4 / ATCC 38163 / CBS 112.46 / NRRL 194 / M139) (Aspergillus nidulans) protein is RuvB-like helicase 1 (rvb1).